Here is a 287-residue protein sequence, read N- to C-terminus: RNA polymerase sigma factor RpoH (287 aa).

Residues Leu54–Arg123 are sigma-70 factor domain-2. The short motif at Asp78–Gln81 is the Interaction with polymerase core subunit RpoC element. A sigma-70 factor domain-4 region spans residues Ala230 to Val283. A DNA-binding region (H-T-H motif) is located at residues Leu256–Lys275.

It belongs to the sigma-70 factor family. RpoH subfamily. Interacts with the RNA polymerase core enzyme.

The protein localises to the cytoplasm. Its function is as follows. Sigma factors are initiation factors that promote the attachment of RNA polymerase to specific initiation sites and are then released. This sigma factor is involved in regulation of expression of heat shock genes. The protein is RNA polymerase sigma factor RpoH of Buchnera aphidicola subsp. Baizongia pistaciae (strain Bp).